The following is a 192-amino-acid chain: A-type ATP synthase subunit E (192 aa).

The interval 1–66 (MSLDTVVEDI…QERDQKLSSA (66 aa)) is disordered. The segment covering 8-26 (EDIRDEARARADEIRSEGE) has biased composition (basic and acidic residues). Over residues 27-49 (ERAEEIIDEAEREADDIVDEAER) the composition is skewed to acidic residues. The segment covering 50-66 (EAERKISQERDQKLSSA) has biased composition (basic and acidic residues).

This sequence belongs to the V-ATPase E subunit family. Has multiple subunits with at least A(3), B(3), C, D, E, F, H, I and proteolipid K(x).

The protein localises to the cell membrane. Its function is as follows. Component of the A-type ATP synthase that produces ATP from ADP in the presence of a proton gradient across the membrane. The chain is A-type ATP synthase subunit E from Natronomonas pharaonis (strain ATCC 35678 / DSM 2160 / CIP 103997 / JCM 8858 / NBRC 14720 / NCIMB 2260 / Gabara) (Halobacterium pharaonis).